Consider the following 33-residue polypeptide: DELTA-pseudomyrmecitoxin-Pp1a subunit B (33 aa).

As to quaternary structure, heterodimer composed of subunit A and subunit B (DELTA-PSDTX-Pp1a); disulfide-linked. Expressed by the venom gland.

The protein resides in the secreted. In terms of biological role, this heterodimer has insecticidal and cytotoxic properties. Induces immediate paralysis when injected into blowflies (Lucilia cuprina), and then death within 24 hours. Also inhibits the growth of Aedes albopictus mosquito C6/36 cells. In Pseudomyrmex penetrator (Ant), this protein is DELTA-pseudomyrmecitoxin-Pp1a subunit B.